A 510-amino-acid chain; its full sequence is Olfactomedin-4 (510 aa).

Residues 1-20 (MRPGLSFLLALLFFLGQAAG) form the signal peptide. 2 N-linked (GlcNAc...) asparagine glycosylation sites follow: Asn-72 and Asn-136. Residues 155–234 (DFELIKVEVK…ECEASKDQNT (80 aa)) adopt a coiled-coil conformation. The region spanning 245–507 (SCGHGGVVNI…LLNYDLSVLQ (263 aa)) is the Olfactomedin-like domain. Residues Cys-246 and Cys-437 are joined by a disulfide bond. A glycan (N-linked (GlcNAc...) asparagine) is linked at Asn-253.

In terms of assembly, homomultimer; disulfide-linked. Interacts with NDUFA13. Interacts with cell surface lectins (locutions ricinus communis agglutinin I, concanavalin-A and wheat germ agglutinin) and cadherin. N-glycosylated. In terms of tissue distribution, expressed during myeloid lineage development. Much higher expression in bone marrow neutrophils than in peripheral blood neutrophils (at protein level). Strongly expressed in the prostate, small intestine and colon and moderately expressed in the bone marrow and stomach. Overexpressed in some pancreatic cancer tissues.

It is found in the secreted. The protein localises to the extracellular space. Its subcellular location is the mitochondrion. In terms of biological role, may promote proliferation of pancreatic cancer cells by favoring the transition from the S to G2/M phase. In myeloid leukemic cell lines, inhibits cell growth and induces cell differentiation and apoptosis. May play a role in the inhibition of EIF4EBP1 phosphorylation/deactivation. Facilitates cell adhesion, most probably through interaction with cell surface lectins and cadherin. This chain is Olfactomedin-4 (OLFM4), found in Homo sapiens (Human).